The sequence spans 400 residues: Serine/threonine transporter SstT (400 aa).

9 helical membrane passes run 14–34, 48–68, 76–96, 136–156, 177–197, 211–231, 285–305, 311–331, and 349–371; these read IIIA…VTPY, SVAP…FQVG, VLLL…IASL, AISE…GLAM, IIHK…AVTF, LLAV…PILV, IPLG…VLTL, LGIH…TISA, and CSLF…IISV.

This sequence belongs to the dicarboxylate/amino acid:cation symporter (DAACS) (TC 2.A.23) family.

The protein resides in the cell inner membrane. The enzyme catalyses L-serine(in) + Na(+)(in) = L-serine(out) + Na(+)(out). It catalyses the reaction L-threonine(in) + Na(+)(in) = L-threonine(out) + Na(+)(out). Its function is as follows. Involved in the import of serine and threonine into the cell, with the concomitant import of sodium (symport system). This is Serine/threonine transporter SstT from Acinetobacter baumannii (strain ATCC 17978 / DSM 105126 / CIP 53.77 / LMG 1025 / NCDC KC755 / 5377).